A 90-amino-acid chain; its full sequence is UPF0298 protein SSU98_1559 (90 aa).

Belongs to the UPF0298 family.

The protein resides in the cytoplasm. This is UPF0298 protein SSU98_1559 from Streptococcus suis (strain 98HAH33).